The sequence spans 257 residues: NAD-capped RNA hydrolase NudC (257 aa).

Residues K25 and R69 each coordinate substrate. Residues C98 and C101 each contribute to the Zn(2+) site. E111 contacts substrate. Zn(2+)-binding residues include C116 and C119. Y124 provides a ligand contact to substrate. In terms of domain architecture, Nudix hydrolase spans 125 to 248 (PQIAPCIIVA…TVARRLIEDT (124 aa)). The a divalent metal cation site is built by A158, E174, and E178. The short motif at 159–180 (GFVEVGETLEQAVAREVMEESG) is the Nudix box element. 192-199 (QPWPFPQS) contributes to the substrate binding site. Position 219 (E219) interacts with a divalent metal cation. A241 provides a ligand contact to substrate.

This sequence belongs to the Nudix hydrolase family. NudC subfamily. As to quaternary structure, homodimer. It depends on Mg(2+) as a cofactor. Mn(2+) is required as a cofactor. Zn(2+) serves as cofactor.

It catalyses the reaction a 5'-end NAD(+)-phospho-ribonucleoside in mRNA + H2O = a 5'-end phospho-adenosine-phospho-ribonucleoside in mRNA + beta-nicotinamide D-ribonucleotide + 2 H(+). The catalysed reaction is NAD(+) + H2O = beta-nicotinamide D-ribonucleotide + AMP + 2 H(+). The enzyme catalyses NADH + H2O = reduced beta-nicotinamide D-ribonucleotide + AMP + 2 H(+). Functionally, mRNA decapping enzyme that specifically removes the nicotinamide adenine dinucleotide (NAD) cap from a subset of mRNAs by hydrolyzing the diphosphate linkage to produce nicotinamide mononucleotide (NMN) and 5' monophosphate mRNA. The NAD-cap is present at the 5'-end of some mRNAs and stabilizes RNA against 5'-processing. Has preference for mRNAs with a 5'-end purine. Catalyzes the hydrolysis of a broad range of dinucleotide pyrophosphates. The chain is NAD-capped RNA hydrolase NudC from Escherichia fergusonii (strain ATCC 35469 / DSM 13698 / CCUG 18766 / IAM 14443 / JCM 21226 / LMG 7866 / NBRC 102419 / NCTC 12128 / CDC 0568-73).